The primary structure comprises 153 residues: MAKRIIYPLYQLGNPQLRIFRPTFNMTLVRPGKEQPPDTVQFRISMAMTKCDVRNYLEKIYSVPVSAVRTRIQYCSNKKRNHLNQRVKRPDYKVAYVQLAQQQTFQFPDIFPEKDKKSKEGSVEEMHEKFMEDERQRQKPDPRRGGVTEWFGL.

Positions 110-153 (IFPEKDKKSKEGSVEEMHEKFMEDERQRQKPDPRRGGVTEWFGL) are disordered. Residues 111-146 (FPEKDKKSKEGSVEEMHEKFMEDERQRQKPDPRRGG) show a composition bias toward basic and acidic residues.

The protein belongs to the universal ribosomal protein uL23 family. Component of the mitochondrial ribosome large subunit (39S) which comprises a 16S rRNA and about 50 distinct proteins.

The protein localises to the mitochondrion. This Danio rerio (Zebrafish) protein is Large ribosomal subunit protein uL23m (mrpl23).